We begin with the raw amino-acid sequence, 109 residues long: CRISPR-associated endoribonuclease Cas2 (109 aa).

Asp8 provides a ligand contact to Mg(2+).

The protein belongs to the CRISPR-associated endoribonuclease Cas2 protein family. As to quaternary structure, homodimer, forms a heterotetramer with a Cas1 homodimer. It depends on Mg(2+) as a cofactor.

Its function is as follows. CRISPR (clustered regularly interspaced short palindromic repeat), is an adaptive immune system that provides protection against mobile genetic elements (viruses, transposable elements and conjugative plasmids). CRISPR clusters contain sequences complementary to antecedent mobile elements and target invading nucleic acids. CRISPR clusters are transcribed and processed into CRISPR RNA (crRNA). Functions as a ssRNA-specific endoribonuclease. Involved in the integration of spacer DNA into the CRISPR cassette. The sequence is that of CRISPR-associated endoribonuclease Cas2 from Streptococcus mutans serotype c (strain ATCC 700610 / UA159).